A 193-amino-acid polypeptide reads, in one-letter code: Large ribosomal subunit protein uL18 (193 aa).

Belongs to the universal ribosomal protein uL18 family. As to quaternary structure, part of the 50S ribosomal subunit. Contacts the 5S and 23S rRNAs.

In terms of biological role, this is one of the proteins that bind and probably mediate the attachment of the 5S RNA into the large ribosomal subunit, where it forms part of the central protuberance. This chain is Large ribosomal subunit protein uL18, found in Methanosphaera stadtmanae (strain ATCC 43021 / DSM 3091 / JCM 11832 / MCB-3).